Reading from the N-terminus, the 229-residue chain is Large ribosomal subunit protein uL1 (229 aa).

This sequence belongs to the universal ribosomal protein uL1 family. As to quaternary structure, part of the 50S ribosomal subunit.

Functionally, binds directly to 23S rRNA. The L1 stalk is quite mobile in the ribosome, and is involved in E site tRNA release. Its function is as follows. Protein L1 is also a translational repressor protein, it controls the translation of the L11 operon by binding to its mRNA. The protein is Large ribosomal subunit protein uL1 of Listeria innocua serovar 6a (strain ATCC BAA-680 / CLIP 11262).